Here is a 181-residue protein sequence, read N- to C-terminus: uncharacterized protein (181 aa).

The interval 162–181 (QARGPAGTRTPQRRCSSHEA) is disordered.

This is an uncharacterized protein from Homo sapiens (Human).